Consider the following 355-residue polypeptide: UDP-N-acetylglucosamine--N-acetylmuramyl-(pentapeptide) pyrophosphoryl-undecaprenol N-acetylglucosamine transferase (355 aa).

Residues 13–15 (TGG), N125, R162, S190, I244, and Q289 contribute to the UDP-N-acetyl-alpha-D-glucosamine site.

The protein belongs to the glycosyltransferase 28 family. MurG subfamily.

Its subcellular location is the cell inner membrane. It catalyses the reaction di-trans,octa-cis-undecaprenyl diphospho-N-acetyl-alpha-D-muramoyl-L-alanyl-D-glutamyl-meso-2,6-diaminopimeloyl-D-alanyl-D-alanine + UDP-N-acetyl-alpha-D-glucosamine = di-trans,octa-cis-undecaprenyl diphospho-[N-acetyl-alpha-D-glucosaminyl-(1-&gt;4)]-N-acetyl-alpha-D-muramoyl-L-alanyl-D-glutamyl-meso-2,6-diaminopimeloyl-D-alanyl-D-alanine + UDP + H(+). The protein operates within cell wall biogenesis; peptidoglycan biosynthesis. Its function is as follows. Cell wall formation. Catalyzes the transfer of a GlcNAc subunit on undecaprenyl-pyrophosphoryl-MurNAc-pentapeptide (lipid intermediate I) to form undecaprenyl-pyrophosphoryl-MurNAc-(pentapeptide)GlcNAc (lipid intermediate II). This chain is UDP-N-acetylglucosamine--N-acetylmuramyl-(pentapeptide) pyrophosphoryl-undecaprenol N-acetylglucosamine transferase, found in Neisseria meningitidis serogroup A / serotype 4A (strain DSM 15465 / Z2491).